Here is a 397-residue protein sequence, read N- to C-terminus: Elongation factor Tu (397 aa).

The region spanning 10–207 is the tr-type G domain; sequence KPHVNIGTIG…ACDSYIPEPQ (198 aa). Positions 19 to 26 are G1; the sequence is GHIDHGKT. 19-26 provides a ligand contact to GTP; it reads GHIDHGKT. Residue T26 coordinates Mg(2+). The G2 stretch occupies residues 60–64; it reads GITIA. Residues 81-84 form a G3 region; sequence DCPG. GTP contacts are provided by residues 81-85 and 136-139; these read DCPGH and NKCD. The tract at residues 136-139 is G4; that stretch reads NKCD. A G5 region spans residues 174–176; it reads SAL.

The protein belongs to the TRAFAC class translation factor GTPase superfamily. Classic translation factor GTPase family. EF-Tu/EF-1A subfamily. In terms of assembly, monomer.

It localises to the cytoplasm. The enzyme catalyses GTP + H2O = GDP + phosphate + H(+). Functionally, GTP hydrolase that promotes the GTP-dependent binding of aminoacyl-tRNA to the A-site of ribosomes during protein biosynthesis. This Nitratidesulfovibrio vulgaris (strain ATCC 29579 / DSM 644 / CCUG 34227 / NCIMB 8303 / VKM B-1760 / Hildenborough) (Desulfovibrio vulgaris) protein is Elongation factor Tu.